The following is a 1517-amino-acid chain: DNA-directed RNA polymerase subunit beta' (1517 aa).

The Zn(2+) site is built by Cys-71, Cys-73, Cys-86, and Cys-89. Residues Asp-482, Asp-484, and Asp-486 each contribute to the Mg(2+) site. Positions 812, 886, 893, and 896 each coordinate Zn(2+).

The protein belongs to the RNA polymerase beta' chain family. As to quaternary structure, the RNAP catalytic core consists of 2 alpha, 1 beta, 1 beta' and 1 omega subunit. When a sigma factor is associated with the core the holoenzyme is formed, which can initiate transcription. It depends on Mg(2+) as a cofactor. Zn(2+) is required as a cofactor.

The catalysed reaction is RNA(n) + a ribonucleoside 5'-triphosphate = RNA(n+1) + diphosphate. Its function is as follows. DNA-dependent RNA polymerase catalyzes the transcription of DNA into RNA using the four ribonucleoside triphosphates as substrates. The sequence is that of DNA-directed RNA polymerase subunit beta' from Campylobacter jejuni subsp. jejuni serotype O:23/36 (strain 81-176).